The sequence spans 354 residues: Arginase-2, mitochondrial (354 aa).

The N-terminal 22 residues, 1–22 (MFLRSSVSRLLHGQIPCALTRS), are a transit peptide targeting the mitochondrion. Mn(2+) is bound by residues His120, Asp143, His145, and Asp147. Residues 145–149 (HADIN), 156–158 (SGN), and Glu202 contribute to the substrate site. Mn(2+) contacts are provided by Asp251 and Asp253. Residues Thr265 and Glu296 each coordinate substrate.

Belongs to the arginase family. As to quaternary structure, homotrimer. Mn(2+) is required as a cofactor.

The protein resides in the mitochondrion. The catalysed reaction is L-arginine + H2O = urea + L-ornithine. It functions in the pathway nitrogen metabolism; urea cycle; L-ornithine and urea from L-arginine: step 1/1. Functionally, may play a role in the regulation of extra-urea cycle arginine metabolism and also in down-regulation of nitric oxide synthesis. Extrahepatic arginase functions to regulate L-arginine bioavailability to nitric oxid synthase (NOS). Arginine metabolism is a critical regulator of innate and adaptive immune responses. Seems to be involved in negative regulation of the survival capacity of activated T cells. May suppress inflammation-related signaling in asthmatic airway epithelium. May play a role in promoting prenatal immune suppression. Regulates RPS6KB1 signaling, which promotes endothelial cell senescence and inflammation and implicates NOS3/eNOS dysfunction. Can inhibit endothelial autophagy independently of its enzymatic activity implicating mTORC2 signaling. Involved in vascular smooth muscle cell senescence and apoptosis independently of its enzymatic activity. In Rattus norvegicus (Rat), this protein is Arginase-2, mitochondrial (Arg2).